Reading from the N-terminus, the 514-residue chain is 2-isopropylmalate synthase (514 aa).

The region spanning 5 to 268 is the Pyruvate carboxyltransferase domain; that stretch reads LIIFDTTLRD…DVGIDTSQIV (264 aa). Mn(2+) contacts are provided by Asp14, His202, His204, and Asn239. Residues 395–514 form a regulatory domain region; that stretch reads KFVSLSQHSE…KDDKVNPQRS (120 aa).

It belongs to the alpha-IPM synthase/homocitrate synthase family. LeuA type 1 subfamily. As to quaternary structure, homodimer. Requires Mn(2+) as cofactor.

The protein localises to the cytoplasm. It catalyses the reaction 3-methyl-2-oxobutanoate + acetyl-CoA + H2O = (2S)-2-isopropylmalate + CoA + H(+). The protein operates within amino-acid biosynthesis; L-leucine biosynthesis; L-leucine from 3-methyl-2-oxobutanoate: step 1/4. Its function is as follows. Catalyzes the condensation of the acetyl group of acetyl-CoA with 3-methyl-2-oxobutanoate (2-ketoisovalerate) to form 3-carboxy-3-hydroxy-4-methylpentanoate (2-isopropylmalate). The polypeptide is 2-isopropylmalate synthase (Burkholderia lata (strain ATCC 17760 / DSM 23089 / LMG 22485 / NCIMB 9086 / R18194 / 383)).